We begin with the raw amino-acid sequence, 295 residues long: Cytidine deaminase (295 aa).

CMP/dCMP-type deaminase domains are found at residues 48–168 (EDAD…FGPA) and 187–295 (DDDE…YLSL). 89 to 91 (NME) provides a ligand contact to substrate. Residue His-102 participates in Zn(2+) binding. The active-site Proton donor is the Glu-104. The Zn(2+) site is built by Cys-129 and Cys-132.

It belongs to the cytidine and deoxycytidylate deaminase family. Homodimer. Zn(2+) serves as cofactor.

The enzyme catalyses cytidine + H2O + H(+) = uridine + NH4(+). It carries out the reaction 2'-deoxycytidine + H2O + H(+) = 2'-deoxyuridine + NH4(+). Functionally, this enzyme scavenges exogenous and endogenous cytidine and 2'-deoxycytidine for UMP synthesis. This is Cytidine deaminase from Vibrio cholerae serotype O1 (strain ATCC 39315 / El Tor Inaba N16961).